The primary structure comprises 334 residues: Fructose-1,6-bisphosphatase class 1 (334 aa).

4 residues coordinate Mg(2+): Glu-92, Asp-114, Leu-116, and Asp-117. Substrate is bound by residues 117–120 (DGSS) and Asn-209. Glu-281 contributes to the Mg(2+) binding site.

Belongs to the FBPase class 1 family. Homotetramer. Mg(2+) is required as a cofactor.

The protein resides in the cytoplasm. The catalysed reaction is beta-D-fructose 1,6-bisphosphate + H2O = beta-D-fructose 6-phosphate + phosphate. The protein operates within carbohydrate biosynthesis; gluconeogenesis. In Nitrosomonas europaea (strain ATCC 19718 / CIP 103999 / KCTC 2705 / NBRC 14298), this protein is Fructose-1,6-bisphosphatase class 1.